Consider the following 425-residue polypeptide: 3-phosphoshikimate 1-carboxyvinyltransferase (425 aa).

Residues K21, S22, and R26 each contribute to the 3-phosphoshikimate site. K21 provides a ligand contact to phosphoenolpyruvate. Phosphoenolpyruvate is bound by residues G91 and R119. 3-phosphoshikimate-binding residues include S164, Q166, D311, and K338. Residue Q166 participates in phosphoenolpyruvate binding. D311 (proton acceptor) is an active-site residue. Residues R342 and R383 each coordinate phosphoenolpyruvate.

This sequence belongs to the EPSP synthase family. As to quaternary structure, monomer.

The protein resides in the cytoplasm. It carries out the reaction 3-phosphoshikimate + phosphoenolpyruvate = 5-O-(1-carboxyvinyl)-3-phosphoshikimate + phosphate. It functions in the pathway metabolic intermediate biosynthesis; chorismate biosynthesis; chorismate from D-erythrose 4-phosphate and phosphoenolpyruvate: step 6/7. Its function is as follows. Catalyzes the transfer of the enolpyruvyl moiety of phosphoenolpyruvate (PEP) to the 5-hydroxyl of shikimate-3-phosphate (S3P) to produce enolpyruvyl shikimate-3-phosphate and inorganic phosphate. This is 3-phosphoshikimate 1-carboxyvinyltransferase from Campylobacter fetus subsp. fetus (strain 82-40).